The following is a 159-amino-acid chain: Endoribonuclease YbeY (159 aa).

Zn(2+) contacts are provided by His122, His126, and His132.

It belongs to the endoribonuclease YbeY family. Zn(2+) is required as a cofactor.

Its subcellular location is the cytoplasm. Its function is as follows. Single strand-specific metallo-endoribonuclease involved in late-stage 70S ribosome quality control and in maturation of the 3' terminus of the 16S rRNA. The protein is Endoribonuclease YbeY of Roseiflexus castenholzii (strain DSM 13941 / HLO8).